Consider the following 664-residue polypeptide: DNA ligase (664 aa).

NAD(+) is bound by residues Asp-32–Asp-36 and Ser-80–Leu-81. Lys-122 (N6-AMP-lysine intermediate) is an active-site residue. Arg-144, Glu-178, and Lys-314 together coordinate NAD(+). 4 residues coordinate Zn(2+): Cys-407, Cys-410, Cys-423, and Cys-429. Residues Ile-587–Lys-664 form the BRCT domain.

This sequence belongs to the NAD-dependent DNA ligase family. LigA subfamily. Mg(2+) serves as cofactor. It depends on Mn(2+) as a cofactor.

The catalysed reaction is NAD(+) + (deoxyribonucleotide)n-3'-hydroxyl + 5'-phospho-(deoxyribonucleotide)m = (deoxyribonucleotide)n+m + AMP + beta-nicotinamide D-nucleotide.. Its function is as follows. DNA ligase that catalyzes the formation of phosphodiester linkages between 5'-phosphoryl and 3'-hydroxyl groups in double-stranded DNA using NAD as a coenzyme and as the energy source for the reaction. It is essential for DNA replication and repair of damaged DNA. The chain is DNA ligase from Clostridium botulinum (strain 657 / Type Ba4).